The chain runs to 824 residues: Dapper 1 (824 aa).

Disordered regions lie at residues 1-34, 61-80, 131-150, 454-487, and 516-536; these read MKPI…QRTR, ALTP…GDTP, EEHL…LSDG, TSNV…ESTQ, and ASSS…SSSQ. The segment at 2–343 is interaction with tcf7l1; it reads KPIPATPDHL…PVRTNKPRTS (342 aa). Over residues 11 to 34 the composition is skewed to basic and acidic residues; it reads LGQHQESPRRKDKGEAESERQRTR. Positions 19–47 form a coiled coil; the sequence is RRKDKGEAESERQRTRERLEATLAGLAEL. The span at 520–530 shows a compositional bias: basic and acidic residues; that stretch reads FDERPPLDFKS. The PDZ-binding motif lies at 821-824; the sequence is MTTV.

It belongs to the dapper family. Interacts with dbf4, dvl2 and tcf7l1.

It localises to the cytoplasm. Its subcellular location is the nucleus. Its function is as follows. Involved in regulation of intracellular signaling pathways during development. Specifically thought to play a role in canonical and/or non-canonical Wnt signaling pathways through interaction with DSH (Dishevelled) family proteins. Binds to dvl2 and regulates the degradation of ctnnb1/beta-catenin, thereby modulating the transcriptional activation of target genes of the Wnt signaling pathway. May also bind to and directly stimulate the activity of tcf7l1. This Xenopus tropicalis (Western clawed frog) protein is Dapper 1 (dact1).